The primary structure comprises 199 residues: Extracellular superoxide dismutase [Cu-Zn] (199 aa).

The signal sequence occupies residues 1-20 (MMIASFAIFLSHIIFITYAT). N33, N60, and N70 each carry an N-linked (GlcNAc...) asparagine glycan. Cu cation is bound by residues H89, H91, and H106. C100 and C192 are oxidised to a cystine. H106 contacts Zn(2+). N111 is a glycosylation site (N-linked (GlcNAc...) asparagine). The Zn(2+) site is built by H114, H123, and D126. Residue H163 participates in Cu cation binding.

This sequence belongs to the Cu-Zn superoxide dismutase family. As to quaternary structure, homodimer. Cu cation is required as a cofactor. Zn(2+) serves as cofactor.

The protein resides in the secreted. Its subcellular location is the extracellular space. It catalyses the reaction 2 superoxide + 2 H(+) = H2O2 + O2. Its function is as follows. Protect the extracellular space from toxic effect of reactive oxygen intermediates by converting superoxide radicals into hydrogen peroxide and oxygen. May act in the parasite defense by neutralizing superoxide generated by activated leukocytes, thus acting as both an antioxidant and an anti-inflammatory factor. This chain is Extracellular superoxide dismutase [Cu-Zn], found in Brugia pahangi (Filarial nematode worm).